Consider the following 111-residue polypeptide: Aspartate 1-decarboxylase (111 aa).

S25 acts as the Schiff-base intermediate with substrate; via pyruvic acid in catalysis. The residue at position 25 (S25) is a Pyruvic acid (Ser). Residue T57 coordinates substrate. The active-site Proton donor is the Y58. Residue 73-75 (GPA) participates in substrate binding.

This sequence belongs to the PanD family. In terms of assembly, heterooctamer of four alpha and four beta subunits. Requires pyruvate as cofactor. Post-translationally, is synthesized initially as an inactive proenzyme, which is activated by self-cleavage at a specific serine bond to produce a beta-subunit with a hydroxyl group at its C-terminus and an alpha-subunit with a pyruvoyl group at its N-terminus.

Its subcellular location is the cytoplasm. The enzyme catalyses L-aspartate + H(+) = beta-alanine + CO2. Its pathway is cofactor biosynthesis; (R)-pantothenate biosynthesis; beta-alanine from L-aspartate: step 1/1. Its function is as follows. Catalyzes the pyruvoyl-dependent decarboxylation of aspartate to produce beta-alanine. The chain is Aspartate 1-decarboxylase from Francisella tularensis subsp. tularensis (strain FSC 198).